A 151-amino-acid polypeptide reads, in one-letter code: Deoxyuridine 5'-triphosphate nucleotidohydrolase (151 aa).

Substrate contacts are provided by residues 70-72, Asn83, 87-89, and Met97; these read RSG and LID.

The protein belongs to the dUTPase family. Mg(2+) serves as cofactor.

It catalyses the reaction dUTP + H2O = dUMP + diphosphate + H(+). It functions in the pathway pyrimidine metabolism; dUMP biosynthesis; dUMP from dCTP (dUTP route): step 2/2. Functionally, this enzyme is involved in nucleotide metabolism: it produces dUMP, the immediate precursor of thymidine nucleotides and it decreases the intracellular concentration of dUTP so that uracil cannot be incorporated into DNA. This chain is Deoxyuridine 5'-triphosphate nucleotidohydrolase, found in Pseudomonas paraeruginosa (strain DSM 24068 / PA7) (Pseudomonas aeruginosa (strain PA7)).